The chain runs to 364 residues: Methylthioribose-1-phosphate isomerase (364 aa).

Residue D254 is the Proton donor of the active site.

This sequence belongs to the eIF-2B alpha/beta/delta subunits family. MtnA subfamily.

It localises to the cytoplasm. Its subcellular location is the nucleus. The catalysed reaction is 5-(methylsulfanyl)-alpha-D-ribose 1-phosphate = 5-(methylsulfanyl)-D-ribulose 1-phosphate. The protein operates within amino-acid biosynthesis; L-methionine biosynthesis via salvage pathway; L-methionine from S-methyl-5-thio-alpha-D-ribose 1-phosphate: step 1/6. Functionally, catalyzes the interconversion of methylthioribose-1-phosphate (MTR-1-P) into methylthioribulose-1-phosphate (MTRu-1-P). This Drosophila yakuba (Fruit fly) protein is Methylthioribose-1-phosphate isomerase.